Reading from the N-terminus, the 459-residue chain is Cysteine--tRNA ligase (459 aa).

Cysteine 28 lines the Zn(2+) pocket. The 'HIGH' region signature appears at valine 30–histidine 40. Zn(2+) contacts are provided by cysteine 209, histidine 234, and glutamate 238. The 'KMSKS' region motif lies at lysine 266–serine 270. Residue lysine 269 participates in ATP binding.

The protein belongs to the class-I aminoacyl-tRNA synthetase family. As to quaternary structure, monomer. The cofactor is Zn(2+).

It is found in the cytoplasm. It carries out the reaction tRNA(Cys) + L-cysteine + ATP = L-cysteinyl-tRNA(Cys) + AMP + diphosphate. In Haemophilus influenzae (strain 86-028NP), this protein is Cysteine--tRNA ligase.